The chain runs to 249 residues: Probable transcriptional regulatory protein DICTH_1505 (249 aa).

Belongs to the TACO1 family.

The protein resides in the cytoplasm. In Dictyoglomus thermophilum (strain ATCC 35947 / DSM 3960 / H-6-12), this protein is Probable transcriptional regulatory protein DICTH_1505.